A 475-amino-acid chain; its full sequence is tRNA-2-methylthio-N(6)-dimethylallyladenosine synthase (475 aa).

The MTTase N-terminal domain occupies 2 to 119 (AKLHITTWGC…LPEMINKIRG (118 aa)). 6 residues coordinate [4Fe-4S] cluster: cysteine 11, cysteine 48, cysteine 82, cysteine 156, cysteine 160, and cysteine 163. The 233-residue stretch at 142–374 (RAEGPTAFVS…QQRINHQAMQ (233 aa)) folds into the Radical SAM core domain. Residues 377-440 (RAMLGTEQRV…TNSLRGDVVR (64 aa)) form the TRAM domain.

This sequence belongs to the methylthiotransferase family. MiaB subfamily. Monomer. Requires [4Fe-4S] cluster as cofactor.

The protein localises to the cytoplasm. It catalyses the reaction N(6)-dimethylallyladenosine(37) in tRNA + (sulfur carrier)-SH + AH2 + 2 S-adenosyl-L-methionine = 2-methylsulfanyl-N(6)-dimethylallyladenosine(37) in tRNA + (sulfur carrier)-H + 5'-deoxyadenosine + L-methionine + A + S-adenosyl-L-homocysteine + 2 H(+). Functionally, catalyzes the methylthiolation of N6-(dimethylallyl)adenosine (i(6)A), leading to the formation of 2-methylthio-N6-(dimethylallyl)adenosine (ms(2)i(6)A) at position 37 in tRNAs that read codons beginning with uridine. In Actinobacillus pleuropneumoniae serotype 5b (strain L20), this protein is tRNA-2-methylthio-N(6)-dimethylallyladenosine synthase.